Here is a 352-residue protein sequence, read N- to C-terminus: Pheromone-regulated membrane protein 6 (352 aa).

Residues 1 to 36 (MESSLQKLKFQDIDINLIPTAKWTTKLQYILYTWCQ) lie on the Extracellular side of the membrane. The helical transmembrane segment at 37-57 (SILHVAMFFSDIYTCIKLLAF) threads the bilayer. Topologically, residues 58-76 (NTWSNNIIQPFLEFRISKW) are cytoplasmic. The chain crosses the membrane as a helical span at residues 77–97 (LFSGCILCSSLILIWELVIGL). The Extracellular portion of the chain corresponds to 98–227 (RVYRKKEITS…VILSFMLFSF (130 aa)). Residues 228–248 (IIWVILISKLILSIIIFIIFI) form a helical membrane-spanning segment. Over 249–352 (RPRFLSSKRK…FPQKYKHKYI (104 aa)) the chain is Cytoplasmic.

This sequence belongs to the KCH1 low affinity K(+) transporter family.

It localises to the cell membrane. The protein resides in the bud tip. The protein localises to the vacuole lumen. The catalysed reaction is K(+)(in) = K(+)(out). Its function is as follows. Low affinity potassium transporter that, with KCH1, participates in high-affinity Ca(2+) influx system (HACS) activation during the response to mating pheromone. Directly promotes K(+) influx and HACS may electrochemically respond to this K(+) influx. KCH1 and PRM6/KCH2 act at the apex of the calcium signaling pathway that is used for survival during prolonged exposures to mating pheromones. This Saccharomyces cerevisiae (strain ATCC 204508 / S288c) (Baker's yeast) protein is Pheromone-regulated membrane protein 6.